A 178-amino-acid polypeptide reads, in one-letter code: ATP-dependent protease subunit HslV (178 aa).

Residue Thr-7 is part of the active site. Na(+) contacts are provided by Gly-162, Cys-165, and Thr-168.

Belongs to the peptidase T1B family. HslV subfamily. In terms of assembly, a double ring-shaped homohexamer of HslV is capped on each side by a ring-shaped HslU homohexamer. The assembly of the HslU/HslV complex is dependent on binding of ATP.

The protein localises to the cytoplasm. It catalyses the reaction ATP-dependent cleavage of peptide bonds with broad specificity.. Its activity is regulated as follows. Allosterically activated by HslU binding. In terms of biological role, protease subunit of a proteasome-like degradation complex believed to be a general protein degrading machinery. This chain is ATP-dependent protease subunit HslV, found in Burkholderia mallei (strain ATCC 23344).